The chain runs to 101 residues: Small ribosomal subunit protein uS14 (101 aa).

The span at 1–10 shows a compositional bias: basic and acidic residues; the sequence is MAKNSMVERD. Residues 1–20 are disordered; it reads MAKNSMVERDRKRRKLAQKY.

The protein belongs to the universal ribosomal protein uS14 family. Part of the 30S ribosomal subunit. Contacts proteins S3 and S10.

Its function is as follows. Binds 16S rRNA, required for the assembly of 30S particles and may also be responsible for determining the conformation of the 16S rRNA at the A site. In Halorhodospira halophila (strain DSM 244 / SL1) (Ectothiorhodospira halophila (strain DSM 244 / SL1)), this protein is Small ribosomal subunit protein uS14.